Consider the following 444-residue polypeptide: Protein cereblon (444 aa).

The segment at M1–D52 is disordered. The segment covering A23–D37 has biased composition (acidic residues). The 242-residue stretch at C80 to T321 folds into the Lon N-terminal domain. The CULT domain occupies C320–I428. Positions 325 and 328 each coordinate Zn(2+). Positions 380, 382, and 388 each coordinate (S)-thalidomide. Zn(2+) is bound by residues C393 and C396.

The protein belongs to the CRBN family. As to quaternary structure, component of a DCX (DDB1-CUL4-X-box) protein ligase complex, at least composed of CRBN, CUL4A, DDB1 and RBX1. Interacts directly with DDB1. Interacts with KCNT1. Interacts with ILF2. Interacts with TRAF6 and ECSIT. Ubiquitinated, ubiquitination is mediated by its own DCX protein ligase complex.

It localises to the cytoplasm. The protein localises to the nucleus. Its subcellular location is the membrane. It participates in protein modification; protein ubiquitination. Its function is as follows. Substrate recognition component of a DCX (DDB1-CUL4-X-box) E3 protein ligase complex that mediates the ubiquitination and subsequent proteasomal degradation of target proteins, such as MEIS2, ILF2 or GLUL. Normal degradation of key regulatory proteins is required for normal limb outgrowth and expression of the fibroblast growth factor FGF8. Maintains presynaptic glutamate release and consequently cognitive functions, such as memory and learning, by negatively regulating large-conductance calcium-activated potassium (BK) channels in excitatory neurons. Likely to function by regulating the assembly and neuronal surface expression of BK channels via its interaction with KCNT1. May also be involved in regulating anxiety-like behaviors via a BK channel-independent mechanism. Plays a negative role in TLR4 signaling by interacting with TRAF6 and ECSIT, leading to inhibition of ECSIT ubiquitination, an important step of the signaling. This is Protein cereblon (CRBN) from Bos taurus (Bovine).